The primary structure comprises 265 residues: Cell adhesion molecule CEACAM10 (265 aa).

A signal peptide spans 1 to 33 (MELASAHLHKGQVPWVGLLLTASLLTYWSPATT). Ig-like V-type domains are found at residues 35–142 (QVTV…HVHP) and 155–262 (QVTV…NVHA). Asn-44, Asn-87, and Asn-224 each carry an N-linked (GlcNAc...) asparagine glycan.

It belongs to the immunoglobulin superfamily. CEA family. Abundant in seminal vesicle and traces in epididymis and prostate (at protein level). Highly expressed in seminal vesicle, minor in colon and placenta and, to a lesser extent, in small intestine, caecum, stomach, salivary gland and bone marrow.

The protein resides in the secreted. It is found in the extracellular space. Its function is as follows. May interact with other CEACAM proteins on the sperm surface. The chain is Cell adhesion molecule CEACAM10 from Mus musculus (Mouse).